We begin with the raw amino-acid sequence, 226 residues long: Ribonuclease 3 (226 aa).

The region spanning 7–129 (LPRLCRTLGY…IIGAVYLDAD (123 aa)) is the RNase III domain. A Mg(2+)-binding site is contributed by Glu-42. Residue Asp-46 is part of the active site. Mg(2+) is bound by residues Asp-115 and Glu-118. Glu-118 is a catalytic residue. The DRBM domain maps to 156–226 (DAKTLLQEYL…AAQVLELLNQ (71 aa)).

This sequence belongs to the ribonuclease III family. As to quaternary structure, homodimer. Mg(2+) is required as a cofactor.

It is found in the cytoplasm. It catalyses the reaction Endonucleolytic cleavage to 5'-phosphomonoester.. In terms of biological role, digests double-stranded RNA. Involved in the processing of primary rRNA transcript to yield the immediate precursors to the large and small rRNAs (23S and 16S). Processes some mRNAs, and tRNAs when they are encoded in the rRNA operon. Processes pre-crRNA and tracrRNA of type II CRISPR loci if present in the organism. This chain is Ribonuclease 3, found in Shewanella amazonensis (strain ATCC BAA-1098 / SB2B).